The sequence spans 374 residues: Tryptophan--tRNA ligase (374 aa).

A 'HIGH' region motif is present at residues 81–89; the sequence is PSGPVHIGH. The 'KMSKS' region motif lies at 258-262; it reads KMSAS.

Belongs to the class-I aminoacyl-tRNA synthetase family.

The protein localises to the cytoplasm. The catalysed reaction is tRNA(Trp) + L-tryptophan + ATP = L-tryptophyl-tRNA(Trp) + AMP + diphosphate + H(+). This is Tryptophan--tRNA ligase from Pyrobaculum calidifontis (strain DSM 21063 / JCM 11548 / VA1).